Consider the following 655-residue polypeptide: Methylenetetrahydrofolate reductase (NADPH) (655 aa).

The tract at residues 1–39 is disordered; it reads MVNEPRGNGSPGPRWEGSSSGSESSRTSSRCSTPGLDPE. 9 positions are modified to phosphoserine: serine 10, serine 18, serine 19, serine 20, serine 22, serine 24, serine 25, serine 28, and serine 29. The span at 11 to 35 shows a compositional bias: low complexity; the sequence is PGPRWEGSSSGSESSRTSSRCSTPG. Position 33 is a phosphothreonine (threonine 33). Residue glutamate 62 is the Proton donor/acceptor of the active site. Residues 62–67 and 93–94 each bind NAD(+); these read EFFPPR and TW. Position 93 is a phosphothreonine (threonine 93). 93–94 is a binding site for FAD; sequence TW. Serine 102 carries the post-translational modification Phosphoserine. Residues histidine 126, 156–158, 173–174, tyrosine 196, 200–203, aspartate 209, and lysine 216 contribute to the FAD site; these read RGD, YA, and HPEG. Residue aspartate 158 participates in substrate binding. Glutamine 227, tyrosine 320, and arginine 324 together coordinate substrate. A Phosphoserine modification is found at serine 393. A Phosphothreonine modification is found at threonine 450. S-adenosyl-L-methionine is bound by residues asparagine 455, 460–463, 480–484, threonine 559, and threonine 572; these read AAET and TINSQ.

This sequence belongs to the methylenetetrahydrofolate reductase family. Homodimer. FAD serves as cofactor. Phosphorylation of an N-terminal serine-rich phosphorylation region increases sensitivity to S-adenosylmethionine and inhibition.

The catalysed reaction is (6S)-5-methyl-5,6,7,8-tetrahydrofolate + NADP(+) = (6R)-5,10-methylene-5,6,7,8-tetrahydrofolate + NADPH + H(+). It participates in one-carbon metabolism; tetrahydrofolate interconversion. Allosterically regulated by S-adenosylmethionine (SAM). In terms of biological role, catalyzes the conversion of 5,10-methylenetetrahydrofolate to 5-methyltetrahydrofolate, a cosubstrate for homocysteine remethylation to methionine. Represents a key regulatory connection between the folate and methionine cycles. The chain is Methylenetetrahydrofolate reductase (NADPH) (MTHFR) from Bos taurus (Bovine).